Consider the following 211-residue polypeptide: N-(5'-phosphoribosyl)anthranilate isomerase (211 aa).

It belongs to the TrpF family.

The enzyme catalyses N-(5-phospho-beta-D-ribosyl)anthranilate = 1-(2-carboxyphenylamino)-1-deoxy-D-ribulose 5-phosphate. It participates in amino-acid biosynthesis; L-tryptophan biosynthesis; L-tryptophan from chorismate: step 3/5. The polypeptide is N-(5'-phosphoribosyl)anthranilate isomerase (Methanococcus maripaludis (strain DSM 14266 / JCM 13030 / NBRC 101832 / S2 / LL)).